Here is a 347-residue protein sequence, read N- to C-terminus: UDP-N-acetylenolpyruvoylglucosamine reductase (347 aa).

Positions 17 to 187 constitute an FAD-binding PCMH-type domain; it reads IEQLAAQLVV…TAVGLKFAKA (171 aa). Residue R163 is part of the active site. The active-site Proton donor is S232. E327 is an active-site residue.

The protein belongs to the MurB family. It depends on FAD as a cofactor.

Its subcellular location is the cytoplasm. The catalysed reaction is UDP-N-acetyl-alpha-D-muramate + NADP(+) = UDP-N-acetyl-3-O-(1-carboxyvinyl)-alpha-D-glucosamine + NADPH + H(+). The protein operates within cell wall biogenesis; peptidoglycan biosynthesis. Functionally, cell wall formation. The polypeptide is UDP-N-acetylenolpyruvoylglucosamine reductase (Vibrio cholerae serotype O1 (strain ATCC 39541 / Classical Ogawa 395 / O395)).